Reading from the N-terminus, the 220-residue chain is UPF0758 protein CKO_05095 (220 aa).

An MPN domain is found at 98-220 (ALLSPEMTRE…YVSFAERGWI (123 aa)). Residues histidine 169, histidine 171, and aspartate 182 each contribute to the Zn(2+) site. Residues 169–182 (HNHPSGCAEPSKAD) carry the JAMM motif motif.

Belongs to the UPF0758 family. YicR subfamily.

This Citrobacter koseri (strain ATCC BAA-895 / CDC 4225-83 / SGSC4696) protein is UPF0758 protein CKO_05095.